Consider the following 600-residue polypeptide: Elongation factor 4 (600 aa).

Residues Ser5–Lys187 enclose the tr-type G domain. GTP is bound by residues Asp17–Thr22 and Asn134–Asp137.

This sequence belongs to the TRAFAC class translation factor GTPase superfamily. Classic translation factor GTPase family. LepA subfamily.

It is found in the cell inner membrane. It catalyses the reaction GTP + H2O = GDP + phosphate + H(+). Its function is as follows. Required for accurate and efficient protein synthesis under certain stress conditions. May act as a fidelity factor of the translation reaction, by catalyzing a one-codon backward translocation of tRNAs on improperly translocated ribosomes. Back-translocation proceeds from a post-translocation (POST) complex to a pre-translocation (PRE) complex, thus giving elongation factor G a second chance to translocate the tRNAs correctly. Binds to ribosomes in a GTP-dependent manner. This Rhodospirillum centenum (strain ATCC 51521 / SW) protein is Elongation factor 4.